We begin with the raw amino-acid sequence, 234 residues long: Zinc finger FYVE domain-containing protein 21 (234 aa).

An FYVE-type zinc finger spans residues 44–104 (DKECRRCMQC…QCAECALVSL (61 aa)). Zn(2+) contacts are provided by Cys50, Cys53, Cys66, Cys69, Cys74, Cys77, Cys96, and Cys99. A PH-like region spans residues 107–234 (AEFYDKQLKV…AKLLYESRDQ (128 aa)).

As to quaternary structure, interacts with PTK2/FAK1.

It localises to the cell junction. The protein localises to the focal adhesion. Its subcellular location is the cytoplasmic vesicle. The protein resides in the endosome. In terms of biological role, plays a role in cell adhesion, and thereby in cell motility which requires repeated formation and disassembly of focal adhesions. Regulates microtubule-induced PTK2/FAK1 dephosphorylation, an event important for focal adhesion disassembly, as well as integrin beta-1/ITGB1 cell surface expression. This chain is Zinc finger FYVE domain-containing protein 21 (ZFYVE21), found in Homo sapiens (Human).